The primary structure comprises 36 residues: Photosystem II reaction center protein M (36 aa).

A helical transmembrane segment spans residues 5 to 25 (ILGVIATALFIIIPTSFLLIL).

It belongs to the PsbM family. As to quaternary structure, PSII is composed of 1 copy each of membrane proteins PsbA, PsbB, PsbC, PsbD, PsbE, PsbF, PsbH, PsbI, PsbJ, PsbK, PsbL, PsbM, PsbT, PsbX, PsbY, PsbZ, Psb30/Ycf12, at least 3 peripheral proteins of the oxygen-evolving complex and a large number of cofactors. It forms dimeric complexes.

It is found in the plastid. Its subcellular location is the chloroplast thylakoid membrane. In terms of biological role, one of the components of the core complex of photosystem II (PSII). PSII is a light-driven water:plastoquinone oxidoreductase that uses light energy to abstract electrons from H(2)O, generating O(2) and a proton gradient subsequently used for ATP formation. It consists of a core antenna complex that captures photons, and an electron transfer chain that converts photonic excitation into a charge separation. This subunit is found at the monomer-monomer interface. In Chlorella vulgaris (Green alga), this protein is Photosystem II reaction center protein M.